A 304-amino-acid chain; its full sequence is Mycothiol acetyltransferase (304 aa).

E36 is a 1D-myo-inositol 2-(L-cysteinylamino)-2-deoxy-alpha-D-glucopyranoside binding site. Acetyl-CoA is bound at residue 73-75 (LFV). One can recognise an N-acetyltransferase domain in the interval 145–304 (LEIQTYTESV…EEHCVWAKSD (160 aa)). Positions 179, 225, and 236 each coordinate 1D-myo-inositol 2-(L-cysteinylamino)-2-deoxy-alpha-D-glucopyranoside. 240–242 (VGL) serves as a coordination point for acetyl-CoA. Y274 lines the 1D-myo-inositol 2-(L-cysteinylamino)-2-deoxy-alpha-D-glucopyranoside pocket. 279 to 284 (NDPAVK) contacts acetyl-CoA.

Belongs to the acetyltransferase family. MshD subfamily. Monomer.

The catalysed reaction is 1D-myo-inositol 2-(L-cysteinylamino)-2-deoxy-alpha-D-glucopyranoside + acetyl-CoA = mycothiol + CoA + H(+). In terms of biological role, catalyzes the transfer of acetyl from acetyl-CoA to desacetylmycothiol (Cys-GlcN-Ins) to form mycothiol. This is Mycothiol acetyltransferase from Corynebacterium aurimucosum (strain ATCC 700975 / DSM 44827 / CIP 107346 / CN-1) (Corynebacterium nigricans).